A 159-amino-acid chain; its full sequence is Protein NrdI (159 aa).

The protein belongs to the NrdI family.

Its function is as follows. Probably involved in ribonucleotide reductase function. The sequence is that of Protein NrdI from Rhodococcus erythropolis (strain PR4 / NBRC 100887).